The following is a 1088-amino-acid chain: Calcium-transporting ATPase 5, plasma membrane-type (1088 aa).

Positions 1–11 (MESASSSLATS) are enriched in low complexity. Residues 1-32 (MESASSSLATSGRRRSSSGGGGGSWGSIGSAA) are disordered. At 1 to 198 (MESASSSLAT…FLWDACKDLT (198 aa)) the chain is on the cytoplasmic side. A helical membrane pass occupies residues 199–219 (LIILMVAAAVSLALGITTEGI). At 220-221 (KE) the chain is on the extracellular side. The helical transmembrane segment at 222-242 (GWYDGASIAFAVLLVVVVTAT) threads the bilayer. Topologically, residues 243-338 (SDYKQSLQFQ…MSGCKVADGY (96 aa)) are cytoplasmic. A helical membrane pass occupies residues 339–359 (GTMLVTAVGINTEWGLLMASI). Residues 360–375 (SEDSGEETPLQVRLNG) lie on the Extracellular side of the membrane. A helical transmembrane segment spans residues 376–396 (VATFIGMVGLSVALAVLVVLL). The Cytoplasmic segment spans residues 397–425 (ARYFTGHTYNPDGSVQYVKGKMGVGQTIR). The chain crosses the membrane as a helical span at residues 426–446 (GIVGIFTVAVTIVVVAVPEGL). Residues 447-851 (PLAVTLTLAF…GRSVYANIQK (405 aa)) are Extracellular-facing. Aspartate 486 (4-aspartylphosphate intermediate) is an active-site residue. Residues asparagine 532, asparagine 569, and asparagine 737 are each glycosylated (N-linked (GlcNAc...) asparagine). Residues aspartate 794 and aspartate 798 each coordinate Mg(2+). A helical membrane pass occupies residues 852–872 (FIQFQLTVNVAALIINVVAAV). The Cytoplasmic portion of the chain corresponds to 873–880 (SSGNVPLN). Residues 881–901 (AVQLLWVNLIMDTLGALALAT) form a helical membrane-spanning segment. The Extracellular portion of the chain corresponds to 902-919 (EPPTDHLMQRPPVGRREP). Residues 920–940 (LITNVMWRNLIIMALFQVIVL) traverse the membrane as a helical segment. The Cytoplasmic portion of the chain corresponds to 941 to 1000 (LTLNFRGTSLLQLKNDNQAHADKVKNTFIFNTFVLCQVFNEFNARKPDELNIFKGITGNH). A helical transmembrane segment spans residues 1001-1021 (LFMAIVAITVVLQALIVEFLG). Residues 1022 to 1030 (KFTSTTRLT) are Extracellular-facing. Residues 1031–1051 (WQLWLVSIGLAFFSWPLAFVG) traverse the membrane as a helical segment. The Cytoplasmic segment spans residues 1052–1088 (KLIPVPERPLGDFFACCCPGSKQAADAKGDDADHSDV).

Belongs to the cation transport ATPase (P-type) (TC 3.A.3) family. Type IIB subfamily. Interacts with NOH1.

It localises to the cell membrane. It catalyses the reaction Ca(2+)(in) + ATP + H2O = Ca(2+)(out) + ADP + phosphate + H(+). Activated by calmodulin. This magnesium-dependent enzyme catalyzes the hydrolysis of ATP coupled with the translocation of calcium from the cytosol out of the cell, into the endoplasmic reticulum, or into organelles. Involved in salt and drought stress tolerance. Involved in cold stress tolerance. The polypeptide is Calcium-transporting ATPase 5, plasma membrane-type (Oryza sativa subsp. japonica (Rice)).